A 633-amino-acid chain; its full sequence is ATP-dependent RNA helicase mss116, mitochondrial (633 aa).

The N-terminal 32 residues, 1–32, are a transit peptide targeting the mitochondrion; it reads MKTGRTRPLRVFDILVPPWPPTVPHRIKLPRG. The Q motif motif lies at 38 to 66; sequence EFYSAITRNWNKLKGLKNCWQIWKDVQEI. The Helicase ATP-binding domain maps to 70–248; the sequence is IRKYQGESTV…TAEKLSNIQT (179 aa). 83-90 provides a ligand contact to ATP; sequence PGNNDGAH. The short motif at 195 to 198 is the DEAD box element; it reads RPLE. One can recognise a Helicase C-terminal domain in the interval 262-429; it reads FLADVKRILQ…NVDLVIQVGL (168 aa). A disordered region spans residues 567 to 633; the sequence is FNYATGNDLN…GGRGGKPRAA (67 aa).

The protein belongs to the DEAD box helicase family. DDX18/HAS1 subfamily.

Its subcellular location is the mitochondrion matrix. The enzyme catalyses ATP + H2O = ADP + phosphate + H(+). Its function is as follows. ATP-dependent RNA helicase required for mitochondrial splicing of group I and II introns. Also required for efficient mitochondrial translation. The chain is ATP-dependent RNA helicase mss116, mitochondrial (mss116) from Aspergillus oryzae (strain ATCC 42149 / RIB 40) (Yellow koji mold).